Here is a 248-residue protein sequence, read N- to C-terminus: 5'-nucleotidase SurE (248 aa).

Residues aspartate 8, aspartate 9, serine 39, and asparagine 91 each contribute to the a divalent metal cation site.

This sequence belongs to the SurE nucleotidase family. Requires a divalent metal cation as cofactor.

It is found in the cytoplasm. The enzyme catalyses a ribonucleoside 5'-phosphate + H2O = a ribonucleoside + phosphate. Nucleotidase that shows phosphatase activity on nucleoside 5'-monophosphates. In Neisseria meningitidis serogroup C / serotype 2a (strain ATCC 700532 / DSM 15464 / FAM18), this protein is 5'-nucleotidase SurE.